A 204-amino-acid chain; its full sequence is LexA repressor (204 aa).

A DNA-binding region (H-T-H motif) is located at residues 27–47 (VREIGEAVGLASSSTVHGHLA). Catalysis depends on for autocatalytic cleavage activity residues Ser126 and Lys164.

It belongs to the peptidase S24 family. In terms of assembly, homodimer.

It carries out the reaction Hydrolysis of Ala-|-Gly bond in repressor LexA.. In terms of biological role, represses a number of genes involved in the response to DNA damage (SOS response), including recA and lexA. In the presence of single-stranded DNA, RecA interacts with LexA causing an autocatalytic cleavage which disrupts the DNA-binding part of LexA, leading to derepression of the SOS regulon and eventually DNA repair. This chain is LexA repressor, found in Listeria innocua serovar 6a (strain ATCC BAA-680 / CLIP 11262).